Here is a 295-residue protein sequence, read N- to C-terminus: Tissue factor (295 aa).

Positions 1 to 32 (METPAWPRVPRPETAVARTLLLGWVFAQVAGA) are cleaved as a signal peptide. The Extracellular portion of the chain corresponds to 33–251 (SGTTNTVAAY…MGQEKGEFRE (219 aa)). 2 short sequence motifs (WKS motif) span residues 46–48 (WKS) and 77–79 (WKS). Cys-81 and Cys-89 are disulfide-bonded. N-linked (GlcNAc...) asparagine glycans are attached at residues Asn-156 and Asn-169. Residues 190–192 (WKS) carry the WKS motif motif. Cys-218 and Cys-241 form a disulfide bridge. The helical transmembrane segment at 252-274 (IFYIIGAVVFVVIILVIILAISL) threads the bilayer. Topologically, residues 275–295 (HKCRKAGVGQSWKENSPLNVS) are cytoplasmic. Cys-277 carries the S-palmitoyl cysteine lipid modification.

The protein belongs to the tissue factor family. As to quaternary structure, interacts with HSPE; the interaction, inhibited by heparin, promotes the generation of activated factor X and activates coagulation in the presence of activated factor VII. Lung, placenta and pancreas.

The protein localises to the membrane. Its subcellular location is the secreted. Initiates blood coagulation by forming a complex with circulating factor VII or VIIa. The [TF:VIIa] complex activates factors IX or X by specific limited proteolysis. TF plays a role in normal hemostasis by initiating the cell-surface assembly and propagation of the coagulation protease cascade. The protein is Tissue factor (F3) of Homo sapiens (Human).